We begin with the raw amino-acid sequence, 176 residues long: NAD(P)H-quinone oxidoreductase subunit 6, chloroplastic (176 aa).

5 consecutive transmembrane segments (helical) span residues 10-30, 33-53, 63-83, 105-125, and 152-172; these read FLLV…VLFT, IFSA…YILA, LLIY…FMSG, ISLF…GIIW, and FFLP…GAIA.

It belongs to the complex I subunit 6 family. As to quaternary structure, NDH is composed of at least 16 different subunits, 5 of which are encoded in the nucleus.

The protein localises to the plastid. It is found in the chloroplast thylakoid membrane. It catalyses the reaction a plastoquinone + NADH + (n+1) H(+)(in) = a plastoquinol + NAD(+) + n H(+)(out). It carries out the reaction a plastoquinone + NADPH + (n+1) H(+)(in) = a plastoquinol + NADP(+) + n H(+)(out). Its function is as follows. NDH shuttles electrons from NAD(P)H:plastoquinone, via FMN and iron-sulfur (Fe-S) centers, to quinones in the photosynthetic chain and possibly in a chloroplast respiratory chain. The immediate electron acceptor for the enzyme in this species is believed to be plastoquinone. Couples the redox reaction to proton translocation, and thus conserves the redox energy in a proton gradient. The polypeptide is NAD(P)H-quinone oxidoreductase subunit 6, chloroplastic (ndhG) (Spinacia oleracea (Spinach)).